A 185-amino-acid polypeptide reads, in one-letter code: Peptidyl-tRNA hydrolase (185 aa).

Tyr14 is a binding site for tRNA. His19 serves as the catalytic Proton acceptor. TRNA contacts are provided by Tyr64, Asn66, and Asn112.

This sequence belongs to the PTH family. As to quaternary structure, monomer.

The protein resides in the cytoplasm. The catalysed reaction is an N-acyl-L-alpha-aminoacyl-tRNA + H2O = an N-acyl-L-amino acid + a tRNA + H(+). Hydrolyzes ribosome-free peptidyl-tRNAs (with 1 or more amino acids incorporated), which drop off the ribosome during protein synthesis, or as a result of ribosome stalling. In terms of biological role, catalyzes the release of premature peptidyl moieties from peptidyl-tRNA molecules trapped in stalled 50S ribosomal subunits, and thus maintains levels of free tRNAs and 50S ribosomes. In Lactobacillus delbrueckii subsp. bulgaricus (strain ATCC 11842 / DSM 20081 / BCRC 10696 / JCM 1002 / NBRC 13953 / NCIMB 11778 / NCTC 12712 / WDCM 00102 / Lb 14), this protein is Peptidyl-tRNA hydrolase.